The primary structure comprises 149 residues: Transcriptional repressor NrdR (149 aa).

Residues 3–34 fold into a zinc finger; sequence CPFCAAVDTKVIDSRLVSDGSQVRRRRQCLDC. The ATP-cone domain occupies 49 to 139; the sequence is PRVIKSDEVR…VYRSFEDVRE (91 aa).

The protein belongs to the NrdR family. The cofactor is Zn(2+).

Functionally, negatively regulates transcription of bacterial ribonucleotide reductase nrd genes and operons by binding to NrdR-boxes. This is Transcriptional repressor NrdR from Yersinia pseudotuberculosis serotype O:1b (strain IP 31758).